Here is a 176-residue protein sequence, read N- to C-terminus: Transmembrane protein 238 (176 aa).

The disordered stretch occupies residues 1–22 (MAAAPAVCASQGSPPGAPSAPA). The Cytoplasmic segment spans residues 1–36 (MAAAPAVCASQGSPPGAPSAPAAAPAPAAGLGRCRM). The span at 9–22 (ASQGSPPGAPSAPA) shows a compositional bias: low complexity. A helical transmembrane segment spans residues 37 to 57 (ALLLAVALDVAGMAALLTGVF). Topologically, residues 58–69 (AQLQVRGRDFGD) are extracellular. Residues 70-90 (LLIYSGALLVFLSLLGWILWY) form a helical membrane-spanning segment. Over 91-176 (TGNIEISRQE…GPGAAGAGSE (86 aa)) the chain is Cytoplasmic. Positions 124–137 (SAPAAAGQRPAPGS) are enriched in low complexity. The interval 124 to 157 (SAPAAAGQRPAPGSRRARRAARAPPPPAAGSRRV) is disordered. Phosphoserine is present on S175.

It is found in the membrane. This Homo sapiens (Human) protein is Transmembrane protein 238 (TMEM238).